Here is a 349-residue protein sequence, read N- to C-terminus: Ribosomal RNA small subunit methyltransferase H (349 aa).

S-adenosyl-L-methionine-binding positions include 34 to 36 (GGH), D54, F81, D102, and Q109. The disordered stretch occupies residues 328-349 (SRTGSVQHGQAKHKGVVQRGGS).

Belongs to the methyltransferase superfamily. RsmH family.

It is found in the cytoplasm. The catalysed reaction is cytidine(1402) in 16S rRNA + S-adenosyl-L-methionine = N(4)-methylcytidine(1402) in 16S rRNA + S-adenosyl-L-homocysteine + H(+). Specifically methylates the N4 position of cytidine in position 1402 (C1402) of 16S rRNA. This Dehalococcoides mccartyi (strain ATCC BAA-2100 / JCM 16839 / KCTC 5957 / BAV1) protein is Ribosomal RNA small subunit methyltransferase H.